A 51-amino-acid chain; its full sequence is Large ribosomal subunit protein eL39 (51 aa).

It belongs to the eukaryotic ribosomal protein eL39 family.

In Saccharolobus islandicus (strain L.S.2.15 / Lassen #1) (Sulfolobus islandicus), this protein is Large ribosomal subunit protein eL39.